The chain runs to 1053 residues: Carbamoyl phosphate synthase large chain (1053 aa).

A carboxyphosphate synthetic domain region spans residues 1-397 (MPKNTSLKKV…GFKKALRSLD (397 aa)). Residues Arg127, Arg167, Gly173, Gly174, Glu206, Val208, Glu213, Gly239, Val240, His241, Gln282, and Glu294 each contribute to the ATP site. The ATP-grasp 1 domain maps to 131–323 (KKLMLEIGEP…IARVAAKVAI (193 aa)). 3 residues coordinate Mg(2+): Gln282, Glu294, and Asn296. Gln282, Glu294, and Asn296 together coordinate Mn(2+). An oligomerization domain region spans residues 398 to 530 (TDIYRHTDLN…YSTWEQECEL (133 aa)). The tract at residues 531–919 (TQSDRKKILI…YKASQAADNT (389 aa)) is carbamoyl phosphate synthetic domain. The region spanning 661 to 852 (SVLLDQNNIP…LAKIAAKLML (192 aa)) is the ATP-grasp 2 domain. Residues Arg697, Arg736, Leu738, Glu743, Gly768, Val769, His770, Ser771, Gln811, and Glu823 each contribute to the ATP site. The Mg(2+) site is built by Gln811, Glu823, and Asn825. Residues Gln811, Glu823, and Asn825 each contribute to the Mn(2+) site. The 136-residue stretch at 918 to 1053 (NTIPLKGNVF…TVEPLSHYHS (136 aa)) folds into the MGS-like domain. An allosteric domain region spans residues 920 to 1053 (IPLKGNVFIS…TVEPLSHYHS (134 aa)).

This sequence belongs to the CarB family. In terms of assembly, composed of two chains; the small (or glutamine) chain promotes the hydrolysis of glutamine to ammonia, which is used by the large (or ammonia) chain to synthesize carbamoyl phosphate. Tetramer of heterodimers (alpha,beta)4. It depends on Mg(2+) as a cofactor. The cofactor is Mn(2+).

The enzyme catalyses hydrogencarbonate + L-glutamine + 2 ATP + H2O = carbamoyl phosphate + L-glutamate + 2 ADP + phosphate + 2 H(+). It catalyses the reaction hydrogencarbonate + NH4(+) + 2 ATP = carbamoyl phosphate + 2 ADP + phosphate + 2 H(+). It participates in amino-acid biosynthesis; L-arginine biosynthesis; carbamoyl phosphate from bicarbonate: step 1/1. It functions in the pathway pyrimidine metabolism; UMP biosynthesis via de novo pathway; (S)-dihydroorotate from bicarbonate: step 1/3. Large subunit of the glutamine-dependent carbamoyl phosphate synthetase (CPSase). CPSase catalyzes the formation of carbamoyl phosphate from the ammonia moiety of glutamine, carbonate, and phosphate donated by ATP, constituting the first step of 2 biosynthetic pathways, one leading to arginine and/or urea and the other to pyrimidine nucleotides. The large subunit (synthetase) binds the substrates ammonia (free or transferred from glutamine from the small subunit), hydrogencarbonate and ATP and carries out an ATP-coupled ligase reaction, activating hydrogencarbonate by forming carboxy phosphate which reacts with ammonia to form carbamoyl phosphate. This is Carbamoyl phosphate synthase large chain from Methanocorpusculum labreanum (strain ATCC 43576 / DSM 4855 / Z).